We begin with the raw amino-acid sequence, 306 residues long: UDP-3-O-acyl-N-acetylglucosamine deacetylase (306 aa).

Residues H79, H238, and D242 each coordinate Zn(2+). Residue H265 is the Proton donor of the active site.

This sequence belongs to the LpxC family. Requires Zn(2+) as cofactor.

The catalysed reaction is a UDP-3-O-[(3R)-3-hydroxyacyl]-N-acetyl-alpha-D-glucosamine + H2O = a UDP-3-O-[(3R)-3-hydroxyacyl]-alpha-D-glucosamine + acetate. It functions in the pathway glycolipid biosynthesis; lipid IV(A) biosynthesis; lipid IV(A) from (3R)-3-hydroxytetradecanoyl-[acyl-carrier-protein] and UDP-N-acetyl-alpha-D-glucosamine: step 2/6. Its function is as follows. Catalyzes the hydrolysis of UDP-3-O-myristoyl-N-acetylglucosamine to form UDP-3-O-myristoylglucosamine and acetate, the committed step in lipid A biosynthesis. In Shewanella baltica (strain OS223), this protein is UDP-3-O-acyl-N-acetylglucosamine deacetylase.